The chain runs to 388 residues: Na(+)/H(+) antiporter NhaA (388 aa).

The next 11 helical transmembrane spans lie at 14-34 (GGIILIIAAVLAMLMANSGFT), 59-79 (MLLWINDALMAVFFLLIGLEV), 95-115 (AFPVIAAIGGMIVPALLYLAF), 125-145 (GWAIPAATDIAFALGVLALLG), 154-174 (IFLMALAIIDDLGAIVIIALF), 179-199 (LSMVSLGVAAFAIVLLAVLNL), 219-239 (VLKSGVHATLAGVIVGFFIPL), 254-274 (VLHPWVAYLILPLFAFANAGV), 287-307 (ILPLGIIAGLLIGKPLGISLF), 328-348 (IMAVGILCGIGFTMSIFIASL), and 356-376 (ALINWAKLGILIGSLLSAVIG).

It belongs to the NhaA Na(+)/H(+) (TC 2.A.33) antiporter family.

It localises to the cell inner membrane. The catalysed reaction is Na(+)(in) + 2 H(+)(out) = Na(+)(out) + 2 H(+)(in). Functionally, na(+)/H(+) antiporter that extrudes sodium in exchange for external protons. The sequence is that of Na(+)/H(+) antiporter NhaA from Citrobacter koseri (strain ATCC BAA-895 / CDC 4225-83 / SGSC4696).